Consider the following 207-residue polypeptide: Small ribosomal subunit protein uS4 (207 aa).

The segment at 31 to 51 (KCKLDSKPGQHGRTSGARTSD) is disordered. Residues 97–160 (SRLDNVVYRM…KKQARIRESL (64 aa)) enclose the S4 RNA-binding domain.

Belongs to the universal ribosomal protein uS4 family. As to quaternary structure, part of the 30S ribosomal subunit. Contacts protein S5. The interaction surface between S4 and S5 is involved in control of translational fidelity.

Its function is as follows. One of the primary rRNA binding proteins, it binds directly to 16S rRNA where it nucleates assembly of the body of the 30S subunit. Functionally, with S5 and S12 plays an important role in translational accuracy. In Bordetella avium (strain 197N), this protein is Small ribosomal subunit protein uS4.